A 555-amino-acid polypeptide reads, in one-letter code: CTP synthase (555 aa).

Positions 1-271 (MVKRGKKTKY…DDKLAELFNI (271 aa)) are amidoligase domain. Position 19 (Ser-19) interacts with CTP. Ser-19 lines the UTP pocket. ATP is bound by residues 20-25 (SLGKGL) and Asp-77. Asp-77 and Glu-145 together coordinate Mg(2+). Residues 152–154 (DIE), 192–197 (KTKPTQ), and Lys-228 contribute to the CTP site. UTP contacts are provided by residues 192–197 (KTKPTQ) and Lys-228. One can recognise a Glutamine amidotransferase type-1 domain in the interval 297–537 (RIGIVGKYVE…VKAALEHRDA (241 aa)). Gly-358 is an L-glutamine binding site. Catalysis depends on Cys-385, which acts as the Nucleophile; for glutamine hydrolysis. Residues 386-389 (LGLQ), Glu-409, and Arg-466 each bind L-glutamine. Residues His-510 and Glu-512 contribute to the active site. A disordered region spans residues 535-555 (RDAQQRQPPAEVKKLAVGKNG).

Belongs to the CTP synthase family. In terms of assembly, homotetramer.

It catalyses the reaction UTP + L-glutamine + ATP + H2O = CTP + L-glutamate + ADP + phosphate + 2 H(+). It carries out the reaction L-glutamine + H2O = L-glutamate + NH4(+). The enzyme catalyses UTP + NH4(+) + ATP = CTP + ADP + phosphate + 2 H(+). Its pathway is pyrimidine metabolism; CTP biosynthesis via de novo pathway; CTP from UDP: step 2/2. Allosterically activated by GTP, when glutamine is the substrate; GTP has no effect on the reaction when ammonia is the substrate. The allosteric effector GTP functions by stabilizing the protein conformation that binds the tetrahedral intermediate(s) formed during glutamine hydrolysis. Inhibited by the product CTP, via allosteric rather than competitive inhibition. In terms of biological role, catalyzes the ATP-dependent amination of UTP to CTP with either L-glutamine or ammonia as the source of nitrogen. Regulates intracellular CTP levels through interactions with the four ribonucleotide triphosphates. This is CTP synthase from Anaeromyxobacter sp. (strain K).